A 98-amino-acid polypeptide reads, in one-letter code: Sm-like protein LSM8 (98 aa).

Positions 2 to 78 (AATTGLETLV…IGVIGELDEE (77 aa)) constitute a Sm domain.

This sequence belongs to the snRNP Sm proteins family. Component of the heptameric LSM2-LSM8 complex that forms a seven-membered ring structure with a donut shape. The LSM subunits are arranged in the order LSM8, LSM2, LSM3, LSM6, LSM5, LSM7 and LSM4. LSM8 subunit interacts only with its two neighboring subunits, LSM2 and LSM4. Interacts with the prefoldin co-chaperone subunits PFD1, PFD2, PFD3, PFD4, PFD5 and PFD6. Expressed in roots, leaves, stems, flowers and siliques.

The protein resides in the nucleus. Component of the nuclear LSM2-LSM8 complex which is involved splicing nuclear mRNAs. LSM2-LSM8 binds directly to the U6 small nuclear RNAs (snRNAs). LSM8 is essential for the formation of the nuclear LSM2-LSM8 complex involved in the accurate splicing of selected development-related mRNAs through the stabilization of the spliceosomal U6 snRNA. Plays a critical role in the regulation of development-related gene expression. The polypeptide is Sm-like protein LSM8 (Arabidopsis thaliana (Mouse-ear cress)).